A 153-amino-acid polypeptide reads, in one-letter code: UPF0260 protein YcgN (153 aa).

It belongs to the UPF0260 family.

The polypeptide is UPF0260 protein YcgN (Shigella flexneri serotype 5b (strain 8401)).